The primary structure comprises 516 residues: MALAQQFQLNSITFSLLVFLGFVGVSQLIRIYWRLRYIPGPFWAKFTDVQRVFWVQTQRAHEIHRDAHGKYGDIVRFGPNMVSVADPAWIKTIYPMRPGFPKGEFYRALMPYSRQGGALPAVFTTRDENLHKMLKSPVAPLFSLSNVLTLESHVDATIKVLVEQWDRRFLDSQDSIDLADWLSFFAFDVMGTLTFSKRYGFLEEGKDVGGMINTIFTFLKTAAPMTQVPWFDNIWIKNSFAASFRKSNGSSILQIVGKHTSERLKASKSQDMNGSAMSVTKDRDMLDQFIGLAAKNPDLPPWCVTAWTFSNVAAGSDSTAAVMKKVFHSLLSHPNTLQRLMDELIQAQKTNKNMKETPFPSWRDICDLPYLDACILEGIRLHPPFCLPFERVVPKGGIMIGKTYIPEDTLIGMSPWVINHHKPTFGEDAEDWNPNRWMGPEEEKQKREAAILTFGAGKRICLGKQIAMLELKKIVATLLLTYEFEILDPERYEVENWWFFRQHGIDVRVRRRSDKE.

Residues Leu-9–Ile-29 traverse the membrane as a helical segment. 2 N-linked (GlcNAc...) asparagine glycosylation sites follow: Asn-248 and Asn-273. Heme is bound at residue Cys-461.

It belongs to the cytochrome P450 family. It depends on heme as a cofactor.

It localises to the membrane. Its pathway is secondary metabolite biosynthesis; terpenoid biosynthesis. Its function is as follows. Cytochrome P450 monooxygenase; part of the gene cluster that mediates the biosynthesis of xenovulene A, an unusual meroterpenoid that has potent inhibitory effects on the human gamma-aminobutyrate A (GABAA) benzodiazepine receptor. The first step of xenovulene A biosynthesis is the biosynthesis of 3-methylorcinaldehyde performed by the non-reducing polyketide synthase aspks1. The salicylate hydroxylase asL1 then catalyzes the oxidative dearomatization of 3-methylorcinaldehyde to yield a dearomatized hydroxycyclohexadione. The 2-oxoglutarate-dependent dioxygenase asL3 further catalyzes the oxidative ring expansion to provide the first tropolone metabolite. The cytochrome P450 monooxygenase asR2 allows the synthesis of tropolone hemiacetal. In parallel, a previously unrecognised class of terpene cyclase, asR6, produces alpha-humulene from farnesylpyrophosphate (FPP). The putative Diels-Alderase asR5 probably catalyzes the formation of the tropolone-humulene skeleton by linking humulene and the polyketide moiety. Oxidative-ring contractions catalyzed by asL4 and asL6 then processively remove carbon atoms from the polyketide to yield xenovulene A. This chain is Cytochrome P450 monooxygenase asR2, found in Sarocladium schorii (Acremonium strictum (strain IMI 501407)).